Reading from the N-terminus, the 238-residue chain is MSDSKEMGKRQLRPLDEELLTSSHTRHSIKGFGFQTNSGFSSFTGCLVHSQVPLALQVLFLAVCSVLLVVILVKVYKIPSSQEENNQMNVYQELTQLKAGVDRLCRSCPWDWTHFQGSCYFFSVAQKSWNDSATACHNVGAQLVVIKSDEEQNFLQQTSKKRGYTWMGLIDMSKESTWYWVDGSPLTLSFMKYWSKGEPNNLGEEDCAEFRDDGWNDTKCTNKKFWICKKLSTSCPSK.

Topologically, residues 1 to 51 (MSDSKEMGKRQLRPLDEELLTSSHTRHSIKGFGFQTNSGFSSFTGCLVHSQ) are cytoplasmic. The chain crosses the membrane as a helical; Signal-anchor for type II membrane protein span at residues 52–72 (VPLALQVLFLAVCSVLLVVIL). At 73 to 238 (VKVYKIPSSQ…KKLSTSCPSK (166 aa)) the chain is on the extracellular side. Cysteine 108 and cysteine 119 are oxidised to a cystine. A C-type lectin domain is found at 115–229 (FQGSCYFFSV…CTNKKFWICK (115 aa)). N-linked (GlcNAc...) asparagine glycosylation occurs at asparagine 130. 2 cysteine pairs are disulfide-bonded: cysteine 136–cysteine 228 and cysteine 207–cysteine 220. Positions 198, 200, 202, 205, 216, and 217 each coordinate Ca(2+). Residue asparagine 216 is glycosylated (N-linked (GlcNAc...) asparagine).

In terms of tissue distribution, predominantly expressed in dendritic cells. Detected at very low levels in lung, spleen, lymph nodes and bone marrow.

The protein resides in the membrane. Functionally, probable pathogen-recognition receptor. May mediate the endocytosis of pathogens which are subsequently degraded in lysosomal compartments. May recognize in a calcium-dependent manner high mannose N-linked oligosaccharides in a variety of pathogen antigens. This chain is CD209 antigen-like protein A (Cd209a), found in Mus musculus (Mouse).